The sequence spans 482 residues: FAD-linked oxidoreductase alt4 (482 aa).

Positions E53–Q211 constitute an FAD-binding PCMH-type domain.

This sequence belongs to the oxygen-dependent FAD-linked oxidoreductase family. It depends on FAD as a cofactor.

It functions in the pathway secondary metabolite biosynthesis. In terms of biological role, FAD-linked oxidoreductase; part of the gene cluster that mediates the biosynthesis of alternapyrone derivatives. Alternapyrone is a decaketide with octa-methylation from methionine on every C2 unit except the third unit. All the domains in the polyketide synthase alt5 are apparently involved in alternapyrone synthesis, that is, the 8 CMeT, 7 KR, 7 DH, and 4 ER reactions in the 9 KS-mediated condensation steps required for alternapyrone synthesis. the alternapyrone produced by alt5 might be intensively modified by cytochrome P450 monooxygenases alt1, alt2 and alt3 and FAD-dependent oxidoreductase alt4 present in the alt gene cluster. This is FAD-linked oxidoreductase alt4 from Alternaria solani.